The sequence spans 192 residues: Calcium-binding protein K (192 aa).

2 consecutive EF-hand domains span residues 60 to 95 and 96 to 131; these read WDEA…MAKA and PTLD…VVCC. Residues D73, D75, N77, E84, D109, D111, S113, Y115, and E120 each coordinate Ca(2+).

Belongs to the recoverin family.

This is Calcium-binding protein K (cbpK) from Dictyostelium discoideum (Social amoeba).